The chain runs to 838 residues: Probable inorganic carbon transporter subunit DabA (838 aa).

Residues Cys353, Asp355, His537, and Cys552 each contribute to the Zn(2+) site.

It belongs to the inorganic carbon transporter (TC 9.A.2) DabA family. Forms a complex with DabB. Zn(2+) is required as a cofactor.

The protein localises to the cell membrane. Part of an energy-coupled inorganic carbon pump. The protein is Probable inorganic carbon transporter subunit DabA of Chloroflexus aurantiacus (strain ATCC 29366 / DSM 635 / J-10-fl).